Here is a 557-residue protein sequence, read N- to C-terminus: Organic cation/carnitine transporter 2 (557 aa).

Residues 1–20 are Cytoplasmic-facing; it reads MRDYDEVTAFLGEWGPFQRL. The helical transmembrane segment at 21 to 41 threads the bilayer; the sequence is IFFLLSASIIPNGFNGMSIVF. Residues 42 to 142 lie on the Extracellular side of the membrane; that stretch reads LAGTPEHRCL…DLVCKDDWKA (101 aa). N-linked (GlcNAc...) asparagine glycans are attached at residues N57, N64, and N91. The chain crosses the membrane as a helical span at residues 143 to 163; the sequence is PLTTSLFFVGVLMGSFISGQL. Topologically, residues 164 to 172 are cytoplasmic; the sequence is SDRFGRKNV. A helical membrane pass occupies residues 173–193; that stretch reads LFLTMGMQTGFSFLQVFSVNF. The Extracellular portion of the chain corresponds to 194–197; that stretch reads EMFT. A helical membrane pass occupies residues 198–218; sequence VLFVLVGMGQISNYVAAFVLG. Position 218-225 (218-225) interacts with ATP; that stretch reads GTEILSKS. At 219 to 232 the chain is on the cytoplasmic side; sequence TEILSKSIRIIFAT. The chain crosses the membrane as a helical span at residues 233–253; that stretch reads LGVCIFYAFGFMVLPLFAYFI. Over 254–257 the chain is Extracellular; sequence RDWR. Residues 258–278 traverse the membrane as a helical segment; sequence MLLLALTVPGVLCGALWWFIP. Topologically, residues 279 to 341 are cytoplasmic; sequence ESPRWLISQG…YDLIRTRNIR (63 aa). Residues 342–362 traverse the membrane as a helical segment; that stretch reads VITIMSIILWLTISVGYFGLS. The Extracellular portion of the chain corresponds to 363-373; that stretch reads LDTPNLHGDIY. A helical transmembrane segment spans residues 374–394; the sequence is VNCFLLAAVEVPAYVLAWLLL. Topologically, residues 395–406 are cytoplasmic; sequence QYLPRRYSISAA. The helical transmembrane segment at 407–427 threads the bilayer; the sequence is LFLGGSVLLFMQLVPSELFYL. Topologically, residues 428–430 are extracellular; sequence STA. The chain crosses the membrane as a helical span at residues 431-451; sequence LVMVGKFGITSAYSMVYVYTA. The Cytoplasmic segment spans residues 452–462; sequence ELYPTVVRNMG. A helical membrane pass occupies residues 463-483; it reads VGVSSTASRLGSILSPYFVYL. The Extracellular portion of the chain corresponds to 484 to 488; sequence GAYDR. At Y486 the chain carries Phosphotyrosine. The chain crosses the membrane as a helical span at residues 489 to 509; the sequence is FLPYILMGSLTILTAILTLFF. The Cytoplasmic portion of the chain corresponds to 510-557; that stretch reads PESFGVPLPDTIDQMLRVKGIKQWQIQSQTRMQKDGEESPTVLKSTAF. A Phosphoserine modification is found at S548. Residue T550 is modified to Phosphothreonine.

The protein belongs to the major facilitator (TC 2.A.1) superfamily. Organic cation transporter (TC 2.A.1.19) family. In terms of assembly, interacts with PDZK1. Widely expressed. Expressed in kidney, liver and testis. Expressed at the brush border of the small, large intestine and colon (at protein level).

It localises to the apical cell membrane. The protein resides in the basal cell membrane. The protein localises to the cell membrane. The enzyme catalyses (R)-carnitine(out) + Na(+)(out) = (R)-carnitine(in) + Na(+)(in). It carries out the reaction glycine betaine(out) + Na(+)(out) = glycine betaine(in) + Na(+)(in). The catalysed reaction is glycine betaine(out) + (R)-carnitine(in) = glycine betaine(in) + (R)-carnitine(out). It catalyses the reaction O-butanoyl-(R)-carnitine(out) + Na(+)(out) = O-butanoyl-(R)-carnitine(in) + Na(+)(in). The enzyme catalyses O-acetyl-(R)-carnitine(out) + Na(+)(out) = O-acetyl-(R)-carnitine(in) + Na(+)(in). It carries out the reaction O-propanoyl-(R)-carnitine(out) + Na(+)(out) = O-propanoyl-(R)-carnitine(in) + Na(+)(in). The catalysed reaction is (S)-carnitine(out) + Na(+)(out) = (S)-carnitine(in) + Na(+)(in). It catalyses the reaction an O-acyl-(R)-carnitine(out) + Na(+)(out) = an O-acyl-(R)-carnitine(in) + Na(+)(in). The enzyme catalyses L-glutamyl-L-arginyl-glycyl-L-methionyl-L-threonine(out) + Na(+)(out) = L-glutamyl-L-arginyl-glycyl-L-methionyl-L-threonine(in) + Na(+)(in). It carries out the reaction N,N-dimethylglycine(out) + Na(+)(out) = N,N-dimethylglycine(in) + Na(+)(in). Its activity is regulated as follows. Inhibited by emetine, quinidine and verapamil. The IC(50) of emetine is 4.2 uM. Not inhibited by valproic acid. Transport of (R)-carnitine is stimulated by cholesterol in the plasma membrane. In terms of biological role, sodium-ion dependent, high affinity carnitine transporter. Involved in the active cellular uptake of carnitine. Transports one sodium ion with one molecule of carnitine. Also transports organic cations such as tetraethylammonium (TEA) without the involvement of sodium. Also relative uptake activity ratio of carnitine to TEA is 11.3. May also contribute to regulate the transport of organic compounds in testis across the blood-testis-barrier. The chain is Organic cation/carnitine transporter 2 from Mus musculus (Mouse).